The chain runs to 52 residues: Large ribosomal subunit protein bL33 (52 aa).

This sequence belongs to the bacterial ribosomal protein bL33 family.

This Anaeromyxobacter sp. (strain Fw109-5) protein is Large ribosomal subunit protein bL33.